Reading from the N-terminus, the 60-residue chain is Cytotoxin 8 (60 aa).

4 cysteine pairs are disulfide-bonded: C3–C21, C14–C38, C42–C53, and C54–C59.

This sequence belongs to the three-finger toxin family. Short-chain subfamily. Type IA cytotoxin sub-subfamily. Monomer in solution; Homodimer and oligomer in the presence of negatively charged lipids forming a pore with a size ranging between 20 and 30 Angstroms. As to expression, expressed by the venom gland.

It localises to the secreted. It is found in the target cell membrane. Functionally, shows cytolytic activity on many different cells by forming pore in lipid membranes. In vivo, increases heart rate or kills the animal by cardiac arrest. In addition, it binds to heparin with high affinity, interacts with Kv channel-interacting protein 1 (KCNIP1) in a calcium-independent manner, and binds to integrin alpha-V/beta-3 (ITGAV/ITGB3) with moderate affinity. Has hemolytic activity towards human erythrocytes (EC(50)=0.074 uM) and cytolytic activity towards various cell lines. The polypeptide is Cytotoxin 8 (Naja naja (Indian cobra)).